The primary structure comprises 353 residues: Putative permease PerM (353 aa).

7 helical membrane-spanning segments follow: residues 19–39 (IALL…SGLL), 72–92 (IVLV…LPIA), 156–176 (LVGL…VFFL), 217–237 (VLEM…FGLN), 240–260 (LLLA…AFVV), 281–301 (CFAV…PVLF), and 310–330 (LVII…GVFF).

The protein belongs to the autoinducer-2 exporter (AI-2E) (TC 2.A.86) family.

The protein resides in the cell membrane. This Escherichia coli O157:H7 protein is Putative permease PerM (perM).